Consider the following 121-residue polypeptide: Basic phospholipase A2 VRV-PL-V (121 aa).

Intrachain disulfides connect Cys26–Cys115, Cys28–Cys44, Cys43–Cys95, Cys49–Cys121, Cys50–Cys88, Cys57–Cys81, and Cys75–Cys86. Positions 27, 29, and 31 each coordinate Ca(2+). The active site involves His47. Asp48 lines the Ca(2+) pocket. The active site involves Asp89.

The protein belongs to the phospholipase A2 family. Group II subfamily. D49 sub-subfamily. As to quaternary structure, monomer. The cofactor is Ca(2+). Expressed by the venom gland.

The protein resides in the secreted. It carries out the reaction a 1,2-diacyl-sn-glycero-3-phosphocholine + H2O = a 1-acyl-sn-glycero-3-phosphocholine + a fatty acid + H(+). Functionally, snake venom phospholipase A2 (PLA2) that has a low enzymatic activity. PLA2 catalyzes the calcium-dependent hydrolysis of the 2-acyl groups in 3-sn-phosphoglycerides. This chain is Basic phospholipase A2 VRV-PL-V, found in Daboia russelii (Russel's viper).